Consider the following 510-residue polypeptide: MEEIQRYLQLKRSQQHNFLYPLIFQEYIYAFAHDRSFSRSILSEKTGYEKKSSLLIVKRVITRMYQQNPFIIFLNDSTQNKFLGHNNNFYSQLISEGFAFIVEIPFFLRLISSREGKKKKIVKSQNLRSIHSIFPFLEDSFSHLNFLLDILIPHPVHVEILVQTLRYWVKDASSLHLIRFLLNEYCNSNCVFIPKKASSSFSNSKRNQRLFLFLYNSHVCEYESIFFFLRNQSSRLRSTSSRVLLERIYFYGKIEHLVNVVVKVKDFQANLWLVKEPCMHYVRYQRKAILASKGTSLFMNKWKCFLVTFWQWHFSLWFHPRRIYINQLSKNFLECLGYLSSVQMNPSVVRSQILENSFLINNAIKKFDTLVPIIPLIASLANTKFCNVLGHPISKPVWADLSDSHIIDRFGRICRNLSHYHSGSSKKKSLYRIKYILRLSCARTLARKHKSTVRAFFKRLGSELLEEFLMSEEDVLFLTFPKASSTLRGVSKSRIWYLDILCISDLVNYK.

Belongs to the intron maturase 2 family. MatK subfamily.

The protein localises to the plastid. Its subcellular location is the chloroplast. Usually encoded in the trnK tRNA gene intron. Probably assists in splicing its own and other chloroplast group II introns. This Penstemon heterophyllus (Foothill penstemon) protein is Maturase K.